We begin with the raw amino-acid sequence, 309 residues long: DDRGK domain-containing protein 1 (309 aa).

At 1–2 the chain is on the lumenal side; sequence MD. A helical transmembrane segment spans residues 3 to 23; sequence LIILVGIAVALLVVIVTLYLL. At 24–309 the chain is on the cytoplasmic side; it reads QKKNAAPETK…ISAGGGEASS (286 aa). Disordered stretches follow at residues 32–53 and 79–175; these read TKVA…VPRR and ALPA…KEER. A compositionally biased stretch (acidic residues) spans 87–96; it reads DHEDEGQVDG. The segment covering 107–175 has biased composition (basic and acidic residues); sequence LDEKMGAKKR…DAERLAKEER (69 aa). Positions 120 to 177 form a coiled coil; it reads EAKEQKRLQREQELHDREQRKVKEAKEEAERKQQEDLEAEAERKRVDAERLAKEERER.

Belongs to the DDRGK1 family. In terms of assembly, interacts with Atg9; the interaction is transient.

Its subcellular location is the endoplasmic reticulum membrane. Substrate adapter for ufmylation, the covalent attachment of the ubiquitin-like modifier UFM1 to substrate proteins. Required for ufmylation of Atg9; protects the nervous system during aging, possibly by stabilizing Atg9 and supporting its function. The protein is DDRGK domain-containing protein 1 of Drosophila melanogaster (Fruit fly).